Here is a 119-residue protein sequence, read N- to C-terminus: Protein TusC (119 aa).

It belongs to the DsrF/TusC family. In terms of assembly, heterohexamer, formed by a dimer of trimers. The hexameric TusBCD complex contains 2 copies each of TusB, TusC and TusD. The TusBCD complex interacts with TusE.

The protein resides in the cytoplasm. Part of a sulfur-relay system required for 2-thiolation of 5-methylaminomethyl-2-thiouridine (mnm(5)s(2)U) at tRNA wobble positions. The sequence is that of Protein TusC from Cronobacter sakazakii (strain ATCC BAA-894) (Enterobacter sakazakii).